We begin with the raw amino-acid sequence, 564 residues long: MSSRSKRQSHGSTRGKRESESRGSSGRIKKERDREKEPEAASSRGSPVRVKREAEPAAREVPAPALPVVRVKREREADEDSEPEREVRAKNGRVDSEDRRSRHCPYLDTINRSVLDFDFEKLCSISLSHINAYACLVCGKYFQGRGLKSHAYIHSVQFSHHVFLNLHTLKFYCLPDNYEIIDSSLEDITYVLKPTFTKQQIANLDKQAKLSRAYDGTTYLPGIVGLNNIKANDYANAVLQALSNVPPLRNYFLEEDNYKNIKRPPGDIMFLLVQRFGELMRKLWNPRNFKAHVSPHEMLQAVVLCSKKTFQITKQGDGVDFLSWFLNALHSALGGTKKKKKTIVNDVFQGSMRIFTKKLPHPDLPAEEKEQLLHNDEYQETMVESTFMYLTLDLPTAPLYKDEKEQLIIPQVPLFNILAKFNGITEKEYKTYKENFLKRFQLTKLPPYLIFCIKRFTKNNFFVEKNPTIVNFPITNVDLREYLSEEVQAVHKNTTYDLIANIVHDGKPSEGSYRIHVLHHGTGKWYELQDLQVTDILPQMITLSEAYIQIWKRRDNDETNQQGA.

The tract at residues 1-96 (MSSRSKRQSH…VRAKNGRVDS (96 aa)) is disordered. Positions 28–39 (IKKERDREKEPE) are enriched in basic and acidic residues. The residue at position 46 (Ser-46) is a Phosphoserine. A Glycyl lysine isopeptide (Lys-Gly) (interchain with G-Cter in SUMO2) cross-link involves residue Lys-51. A compositionally biased stretch (low complexity) spans 59–69 (REVPAPALPVV). Ser-81 carries the post-translational modification Phosphoserine. Residues 84–96 (EREVRAKNGRVDS) show a composition bias toward basic and acidic residues. Residues 102–199 (RHCPYLDTIN…YVLKPTFTKQ (98 aa)) form a UBP-type; degenerate zinc finger. Residues Cys-135, Cys-138, His-154, and His-160 each coordinate Zn(2+). Residues 224–554 (VGLNNIKAND…EAYIQIWKRR (331 aa)) form the USP domain.

It belongs to the peptidase C19 family. As to quaternary structure, the U4/U6-U5 tri-snRNP complex is a building block of the precatalytic spliceosome (spliceosome B complex). Component of the U4/U6-U5 tri-snRNP complex composed of the U4, U6 and U5 snRNAs and at least PRPF3, PRPF4, PRPF6, PRPF8, PRPF31, SNRNP200, TXNL4A, SNRNP40, SNRPB, SNRPD1, SNRPD2, SNRPD3, SNRPE, SNRPF, SNRPG, DDX23, CD2BP2, PPIH, SNU13, EFTUD2, SART1 and USP39, plus LSM2, LSM3, LSM4, LSM5, LSM6, LSM7 and LSM8.

The protein localises to the nucleus. It carries out the reaction Thiol-dependent hydrolysis of ester, thioester, amide, peptide and isopeptide bonds formed by the C-terminal Gly of ubiquitin (a 76-residue protein attached to proteins as an intracellular targeting signal).. Its function is as follows. Deubiquitinating enzyme that plays a role in many cellular processes including cellular antiviral response, epithelial morphogenesis, DNA repair or B-cell development. Plays a role in pre-mRNA splicing as a component of the U4/U6-U5 tri-snRNP, one of the building blocks of the precatalytic spliceosome. Specifically regulates immunoglobulin gene rearrangement in a spliceosome-dependent manner, which involves modulating chromatin interactions at the Igh locus and therefore plays an essential role in B-cell development. Regulates AURKB mRNA levels, and thereby plays a role in cytokinesis and in the spindle checkpoint. Regulates apoptosis and G2/M cell cycle checkpoint in response to DNA damage by deubiquitinating and stabilizing CHK2. Also plays an important role in DNA repair by controlling the recruitment of XRCC4/LIG4 to DNA double-strand breaks for non-homologous end-joining repair. Participates in antiviral activity by affecting the type I IFN signaling by stabilizing STAT1 and decreasing its 'Lys-6'-linked ubiquitination. Contributes to non-canonical Wnt signaling during epidermal differentiation. Acts as a negative regulator NF-kappa-B activation through deubiquitination of 'Lys-48'-linked ubiquitination of NFKBIA. The polypeptide is Ubiquitin carboxyl-terminal hydrolase 39 (Mus musculus (Mouse)).